Consider the following 518-residue polypeptide: Nuclear receptor ROR-gamma (518 aa).

The segment at 1–30 is modulating; it reads MDRAPQRQHRASRELLAAKKTHTSQIEVIP. 2 NR C4-type zinc fingers span residues 31-51 and 67-91; these read CKIC…CEGC and CTRQ…LQKC. The segment at residues 31-96 is a DNA-binding region (nuclear receptor); the sequence is CKICGDKSSG…RLQKCLALGM (66 aa). Disordered stretches follow at residues 105–183 and 238–258; these read RMSK…SGSG and HPGL…SFRS. A compositionally biased stretch (basic and acidic residues) spans 109–118; sequence KQRDSLHAEV. The span at 119–130 shows a compositional bias: low complexity; it reads QKQLQQRQQQQQ. The NR LBD domain occupies 269–508; that stretch reads EIEHLVQSVC…PPLYKELFST (240 aa). An AF-2 motif is present at residues 501-506; that stretch reads LYKELF.

Belongs to the nuclear hormone receptor family. NR1 subfamily. Interacts (via AF-2 motif) with the coactivator NCOA2 (via LXXLL motif). Interacts with the corepressor NCOR1. Interacts with CRY1. Interacts (via AF-2 motif) with the coactivators NCOA1 and PPARGC1A (via LXXLL motif). Interacts (via AF-2 motif) with PROX1. Interacts with FOXP3. Interacts with NR0B2. As to expression, isoform 1 is widely expressed in many tissues, including liver and adipose, and highly expressed in skeletal muscle. Isoform 2 is primarily expressed in immature thymocytes.

Its subcellular location is the nucleus. Its function is as follows. Nuclear receptor that binds DNA as a monomer to ROR response elements (RORE) containing a single core motif half-site 5'-AGGTCA-3' preceded by a short A-T-rich sequence. Key regulator of cellular differentiation, immunity, peripheral circadian rhythm as well as lipid, steroid, xenobiotics and glucose metabolism. Considered to have intrinsic transcriptional activity, have some natural ligands like oxysterols that act as agonists (25-hydroxycholesterol) or inverse agonists (7-oxygenated sterols), enhancing or repressing the transcriptional activity, respectively. Recruits distinct combinations of cofactors to target gene regulatory regions to modulate their transcriptional expression, depending on the tissue, time and promoter contexts. Regulates the circadian expression of clock genes such as CRY1, BMAL1 and NR1D1 in peripheral tissues and in a tissue-selective manner. Competes with NR1D1 for binding to their shared DNA response element on some clock genes such as BMAL1, CRY1 and NR1D1 itself, resulting in NR1D1-mediated repression or RORC-mediated activation of the expression, leading to the circadian pattern of clock genes expression. Therefore influences the period length and stability of the clock. Involved in the regulation of the rhythmic expression of genes involved in glucose and lipid metabolism, including PLIN2 and AVPR1A. Negative regulator of adipocyte differentiation through the regulation of early phase genes expression, such as MMP3. Controls adipogenesis as well as adipocyte size and modulates insulin sensitivity in obesity. In liver, has specific and redundant functions with RORA as positive or negative modulator of expression of genes encoding phase I and Phase II proteins involved in the metabolism of lipids, steroids and xenobiotics, such as SULT1E1. Also plays a role in the regulation of hepatocyte glucose metabolism through the regulation of G6PC1 and PCK1. Regulates the rhythmic expression of PROX1 and promotes its nuclear localization. Plays an indispensable role in the induction of IFN-gamma dependent anti-mycobacterial systemic immunity. Essential for thymopoiesis and the development of several secondary lymphoid tissues, including lymph nodes and Peyer's patches. Required for the generation of LTi (lymphoid tissue inducer) cells. Regulates thymocyte survival through DNA-binding on ROREs of target gene promoter regions and recruitment of coactivaros via the AF-2. Also plays a key role, downstream of IL6 and TGFB and synergistically with RORA, for lineage specification of uncommitted CD4(+) T-helper (T(H)) cells into T(H)17 cells, antagonizing the T(H)1 program. Probably regulates IL17 and IL17F expression on T(H) by binding to the essential enhancer conserved non-coding sequence 2 (CNS2) in the IL17-IL17F locus. May also play a role in the pre-TCR activation cascade leading to the maturation of alpha/beta T-cells and may participate in the regulation of DNA accessibility in the TCR-J(alpha) locus. The protein is Nuclear receptor ROR-gamma (RORC) of Homo sapiens (Human).